Consider the following 294-residue polypeptide: Transmembrane protein 178B (294 aa).

A signal peptide spans 1–23 (MAAGRLLLYTGLSLALCALGMLA). Residues asparagine 148 and asparagine 152 are each glycosylated (N-linked (GlcNAc...) asparagine). 3 helical membrane-spanning segments follow: residues 172 to 192 (AGFMGMAVAIILFGWIIGVLG), 206 to 226 (LLFLMGGTFCIISLCTCVAGI), and 252 to 272 (MFCAWGGLGLTLISGFFCTLA).

Belongs to the TMEM178 family.

It is found in the membrane. The chain is Transmembrane protein 178B (TMEM178B) from Homo sapiens (Human).